A 234-amino-acid polypeptide reads, in one-letter code: Octanoyltransferase (234 aa).

A BPL/LPL catalytic domain is found at 43–231; that stretch reads IPTRNYFLFV…HFQELFQAEL (189 aa). Substrate is bound by residues 88–95, 160–162, and 173–175; these read RGGDITYH, AMG, and GFA. Cysteine 191 functions as the Acyl-thioester intermediate in the catalytic mechanism.

Belongs to the LipB family.

It is found in the cytoplasm. The catalysed reaction is octanoyl-[ACP] + L-lysyl-[protein] = N(6)-octanoyl-L-lysyl-[protein] + holo-[ACP] + H(+). It participates in protein modification; protein lipoylation via endogenous pathway; protein N(6)-(lipoyl)lysine from octanoyl-[acyl-carrier-protein]: step 1/2. In terms of biological role, catalyzes the transfer of endogenously produced octanoic acid from octanoyl-acyl-carrier-protein onto the lipoyl domains of lipoate-dependent enzymes. Lipoyl-ACP can also act as a substrate although octanoyl-ACP is likely to be the physiological substrate. In Christiangramia forsetii (strain DSM 17595 / CGMCC 1.15422 / KT0803) (Gramella forsetii), this protein is Octanoyltransferase.